The following is a 413-amino-acid chain: S-adenosylmethionine synthase (413 aa).

H15 serves as a coordination point for ATP. D17 lines the Mg(2+) pocket. E43 serves as a coordination point for K(+). Positions 56 and 100 each coordinate L-methionine. The interval 100 to 110 (QSPDISQGVNE) is flexible loop. Residues 171–173 (DGK), 248–249 (KF), D257, 263–264 (RK), A280, and K284 contribute to the ATP site. Position 257 (D257) interacts with L-methionine. Position 288 (K288) interacts with L-methionine.

It belongs to the AdoMet synthase family. As to quaternary structure, homotetramer; dimer of dimers. The cofactor is Mg(2+). K(+) serves as cofactor.

It is found in the cytoplasm. The catalysed reaction is L-methionine + ATP + H2O = S-adenosyl-L-methionine + phosphate + diphosphate. The protein operates within amino-acid biosynthesis; S-adenosyl-L-methionine biosynthesis; S-adenosyl-L-methionine from L-methionine: step 1/1. Its function is as follows. Catalyzes the formation of S-adenosylmethionine (AdoMet) from methionine and ATP. The overall synthetic reaction is composed of two sequential steps, AdoMet formation and the subsequent tripolyphosphate hydrolysis which occurs prior to release of AdoMet from the enzyme. This is S-adenosylmethionine synthase from Prochlorococcus marinus subsp. pastoris (strain CCMP1986 / NIES-2087 / MED4).